Here is a 119-residue protein sequence, read N- to C-terminus: Holo-[acyl-carrier-protein] synthase (119 aa).

2 residues coordinate Mg(2+): D8 and E58.

Belongs to the P-Pant transferase superfamily. AcpS family. It depends on Mg(2+) as a cofactor.

It localises to the cytoplasm. It carries out the reaction apo-[ACP] + CoA = holo-[ACP] + adenosine 3',5'-bisphosphate + H(+). Transfers the 4'-phosphopantetheine moiety from coenzyme A to a Ser of acyl-carrier-protein. This chain is Holo-[acyl-carrier-protein] synthase, found in Streptococcus mutans serotype c (strain ATCC 700610 / UA159).